The chain runs to 109 residues: Phosphoribosyl-ATP pyrophosphatase (109 aa).

The protein belongs to the PRA-PH family.

It localises to the cytoplasm. The catalysed reaction is 1-(5-phospho-beta-D-ribosyl)-ATP + H2O = 1-(5-phospho-beta-D-ribosyl)-5'-AMP + diphosphate + H(+). The protein operates within amino-acid biosynthesis; L-histidine biosynthesis; L-histidine from 5-phospho-alpha-D-ribose 1-diphosphate: step 2/9. The sequence is that of Phosphoribosyl-ATP pyrophosphatase from Paramagnetospirillum magneticum (strain ATCC 700264 / AMB-1) (Magnetospirillum magneticum).